A 119-amino-acid polypeptide reads, in one-letter code: Large ribosomal subunit protein uL18 (119 aa).

This sequence belongs to the universal ribosomal protein uL18 family. In terms of assembly, part of the 50S ribosomal subunit; part of the 5S rRNA/L5/L18/L25 subcomplex. Contacts the 5S and 23S rRNAs.

Its function is as follows. This is one of the proteins that bind and probably mediate the attachment of the 5S RNA into the large ribosomal subunit, where it forms part of the central protuberance. This is Large ribosomal subunit protein uL18 from Cupriavidus necator (strain ATCC 17699 / DSM 428 / KCTC 22496 / NCIMB 10442 / H16 / Stanier 337) (Ralstonia eutropha).